Here is a 508-residue protein sequence, read N- to C-terminus: Lysine--tRNA ligase (508 aa).

Residues Glu-416 and Glu-423 each contribute to the Mg(2+) site.

It belongs to the class-II aminoacyl-tRNA synthetase family. As to quaternary structure, homodimer. Mg(2+) serves as cofactor.

Its subcellular location is the cytoplasm. The catalysed reaction is tRNA(Lys) + L-lysine + ATP = L-lysyl-tRNA(Lys) + AMP + diphosphate. The sequence is that of Lysine--tRNA ligase from Prochlorococcus marinus (strain MIT 9303).